The sequence spans 757 residues: Filensin (757 aa).

The tract at residues 1–39 (MYRRSYVFQTRKEQYERAEEAPRAAEPDRLAEARAAAPN) is head. At Ser5 the chain carries Phosphoserine. The 281-residue stretch at 39-319 (NLAALQGLGE…RIIENEGNRL (281 aa)) folds into the IF rod domain. Residues 40 to 74 (LAALQGLGERVAAHVQRARALEQRHAVLRRQLDAF) are coil 1A. Ala41 bears the N-acetylalanine mark. A linker 1 region spans residues 75 to 83 (QRLDELAGP). Positions 84–183 (EDALARHVEG…RYKKNLLEIQ (100 aa)) are coil 1B. Positions 184-200 (TYVTILQQIIQTTPQAA) are linker 12. A coil 2 region spans residues 201–319 (AITSGMREEK…RIIENEGNRL (119 aa)). The tail stretch occupies residues 320–756 (SSAFIETPIT…KKLGEKGSSS (437 aa)). A phosphoserine mark is found at Ser340 and Ser419. Disordered regions lie at residues 406–436 (EGES…GGKI) and 493–705 (GVVV…PPRK). Gly433 carries N-myristoyl glycine lipidation. Residues 493–512 (GVVVSKGDDSVPPDSGVEPS) show a composition bias toward low complexity. Ser512 is modified (phosphoserine). Over residues 528 to 658 (QEKEDGLKEE…KQDDQKEEGA (131 aa)) the composition is skewed to basic and acidic residues. Repeat 1 spans residues 532-545 (DGLKEEGGPPEGKG). The interval 532-622 (DGLKEEGGPP…EEEGPLQKKE (91 aa)) is 7 X 14 AA tandem repeats. One copy of the 2; truncated repeat lies at 546–552 (EPPEGKG). 5 tandem repeats follow at residues 553–566 (DSVK…EGKG), 567–580 (DGVK…EGKG), 581–594 (DGVK…EGKG), 595–608 (DGVK…EGKG), and 609–622 (EGLK…QKKE). Residues Thr628 and Thr674 each carry the phosphothreonine modification. A phosphoserine mark is found at Ser701, Ser754, and Ser755.

Belongs to the intermediate filament family. As to quaternary structure, part of a complex required for lens intermediate filament formation composed of BFSP1, BFSP2 and CRYAA. Identified in a complex that contains VIM, EZR, AHNAK, BFSP1, BFSP2, ANK2, PLEC, PRX and spectrin. Found in a complex composed of PPL (via C-terminal linker domain), BFSP1 and BFSP2 in the retinal lens. Within the complex interacts with BFSP2. Interacts (via C-terminus) with MIP (via C-terminus) in aged lens fiber cells. Proteolytically cleaved during lens cell fiber differentiation with increased fragmentation as fiber cell age increases. In terms of processing, myristoylated at Gly-433 following proteolytic cleavage at Asp-432. Post-translationally, acetylated at Ala-41 following proteolytic cleavage at Leu-40. As to expression, abundantly expressed in both the inner and outer cortex of the retina, expressed at a lower level in the nucleus of the retina (at protein level). Detected in eye lens fiber cells (at protein level).

It is found in the cell membrane. It localises to the cytoplasm. The protein localises to the cytoskeleton. The protein resides in the cell cortex. Functionally, required for the correct formation of lens intermediate filaments as part of a complex composed of BFSP1, BFSP2 and CRYAA. Involved in altering the calcium regulation of MIP water permeability. This Bos taurus (Bovine) protein is Filensin (BFSP1).